We begin with the raw amino-acid sequence, 137 residues long: Small ribosomal subunit protein uS11 (137 aa).

Disordered regions lie at residues 1 to 32 and 118 to 137; these read MPPK…AHIK and ISDV…RRRV. Residues 12 to 21 are compositionally biased toward basic residues; it reads KTQKSRRRDK.

It belongs to the universal ribosomal protein uS11 family. Part of the 30S ribosomal subunit. Interacts with proteins S7 and S18. Binds to IF-3.

In terms of biological role, located on the platform of the 30S subunit, it bridges several disparate RNA helices of the 16S rRNA. Forms part of the Shine-Dalgarno cleft in the 70S ribosome. In Nocardia farcinica (strain IFM 10152), this protein is Small ribosomal subunit protein uS11.